The sequence spans 355 residues: Heme A synthase (355 aa).

8 helical membrane-spanning segments follow: residues 21–41, 85–102, 136–156, 173–193, 208–228, 264–284, 299–319, and 322–342; these read LARW…VGGI, INLG…FWEW, LFAL…MVAS, LLTA…LGAL, AIGV…VAGL, FLIH…LLLL, ALVI…VSGV, and WVAV…AAAL. Residue histidine 270 participates in heme binding. Heme is bound at residue histidine 327.

It belongs to the COX15/CtaA family. Type 2 subfamily. Interacts with CtaB. Heme b serves as cofactor.

The protein localises to the cell membrane. It carries out the reaction Fe(II)-heme o + 2 A + H2O = Fe(II)-heme a + 2 AH2. It functions in the pathway porphyrin-containing compound metabolism; heme A biosynthesis; heme A from heme O: step 1/1. Catalyzes the conversion of heme O to heme A by two successive hydroxylations of the methyl group at C8. The first hydroxylation forms heme I, the second hydroxylation results in an unstable dihydroxymethyl group, which spontaneously dehydrates, resulting in the formyl group of heme A. The polypeptide is Heme A synthase (Sphingopyxis alaskensis (strain DSM 13593 / LMG 18877 / RB2256) (Sphingomonas alaskensis)).